The chain runs to 341 residues: MESQIQQLQQEIDEYQIRNAGELEAFKLEFTVRKGKIAGLFGQLKTVDSADRPRIGQLLNALKQAAEKKIEEAESCFAQKADADAPSIDLSLPGRRSFCGSEHPAQKVLGDMKRIFTAMGFSIATGPELELDEYNFDRLNFPPNHPARDMQDTFFITRGQPDGDVLLRTHTSPVQVRVMLDEKPPIRVICPGKVYRNEAISARSYCVFHQLEGLYIDKNVSFADLKATIYSFARQMFGSDVKLRFRPSFFPFTEPSAEVDVTCYLCGGKGCRVCKKSGWLEIMGCGMVHPNVMKNCGIDPEEWTGYAFGMGVDRTALLRYKIDDIRLLFENDVRMLSQFTA.

Mg(2+) is bound at residue E254.

It belongs to the class-II aminoacyl-tRNA synthetase family. Phe-tRNA synthetase alpha subunit type 1 subfamily. In terms of assembly, tetramer of two alpha and two beta subunits. It depends on Mg(2+) as a cofactor.

The protein resides in the cytoplasm. The enzyme catalyses tRNA(Phe) + L-phenylalanine + ATP = L-phenylalanyl-tRNA(Phe) + AMP + diphosphate + H(+). This is Phenylalanine--tRNA ligase alpha subunit from Chlorobaculum parvum (strain DSM 263 / NCIMB 8327) (Chlorobium vibrioforme subsp. thiosulfatophilum).